A 375-amino-acid polypeptide reads, in one-letter code: MTLQHTPLNAIHRSLGARMVDFGGWDMPVNYGSQIEEHHAVRQDAGVFDVSHMCVVDLTGARVRDFLRGLLANNVDKLQTPGKALYSCMLNPKGGVIDDLIVYFFREDWFRLVVNAGTAPTDLEWIVAQNAAAGTDVTITPRRSDNNAGAEPLGILAVQGPNARAKTYAALPGSQAVGDALKPFNAGFVTVENVGEIMVARTGYTGEDGFELVVPAAQIAGVWERLLQAGVRPAGLGARDTLRLEAGMNLYGQDMDEHVSPLDAGLAWTVDLQSERDFTGKAALQAGGQREQFVGLILRDKGGVLRAHQKVITAAGDGEITSGTFSPSLSLSIALARLPKEVPVGTDVQVEIRDRKLTATVVKLPFVRNGKALVS.

The protein belongs to the GcvT family. As to quaternary structure, the glycine cleavage system is composed of four proteins: P, T, L and H.

It carries out the reaction N(6)-[(R)-S(8)-aminomethyldihydrolipoyl]-L-lysyl-[protein] + (6S)-5,6,7,8-tetrahydrofolate = N(6)-[(R)-dihydrolipoyl]-L-lysyl-[protein] + (6R)-5,10-methylene-5,6,7,8-tetrahydrofolate + NH4(+). In terms of biological role, the glycine cleavage system catalyzes the degradation of glycine. The chain is Aminomethyltransferase from Ralstonia pickettii (strain 12J).